Reading from the N-terminus, the 837-residue chain is Tuftelin-interacting protein 11 (837 aa).

Composition is skewed to basic and acidic residues over residues 1 to 13 and 53 to 64; these read MSLSHLYRDGEGR and VWAERDSDDERP. 3 disordered regions span residues 1 to 21, 53 to 72, and 85 to 133; these read MSLSHLYRDGEGRIDDDDDER, VWAERDSDDERPSFGGKRAR, and LKKG…KGFA. 3 positions are modified to phosphoserine: Ser2, Ser59, and Ser98. Residues 91–102 show a composition bias toward acidic residues; the sequence is EEAELEDSDDEE. Basic and acidic residues predominate over residues 103-116; sequence RPVKQDDFPKDFGP. The residue at position 144 (Ser144) is a Phosphoserine. Residues 149 to 195 enclose the G-patch domain; it reads TKGIGQKLLQKMGYVPGRGLGKNAQGIINPIEAKQRKGKGAVGAYGS. Positions 179 to 236 are disordered; the sequence is IEAKQRKGKGAVGAYGSERTTQSMQDFPVVDSEEEAEEEFQKGLSQWRKDPSGSKKKP. Residue Ser210 is modified to Phosphoserine. Positions 700–705 match the Nuclear localization signal motif; the sequence is VKDKFN. A required for nuclear speckle localization region spans residues 710-734; the sequence is IMNRAVSSNVGAYMQPGARENIAYL.

It belongs to the TFP11/STIP family. As to quaternary structure, identified in the spliceosome C complex. Found in the Intron Large (IL) complex, a post-mRNA release spliceosomal complex containing the excised intron, U2, U5 and U6 snRNPs, and splicing factors. Interacts with TUFT1. Interacts with DHX15; indicative for a recruitment of DHX15 to the IL complex. Interacts with GCFC2.

It localises to the cytoplasm. It is found in the nucleus. Its function is as follows. Involved in pre-mRNA splicing, specifically in spliceosome disassembly during late-stage splicing events. Intron turnover seems to proceed through reactions in two lariat-intron associated complexes termed Intron Large (IL) and Intron Small (IS). In cooperation with DHX15 seems to mediate the transition of the U2, U5 and U6 snRNP-containing IL complex to the snRNP-free IS complex leading to efficient debranching and turnover of excised introns. May play a role in the differentiation of ameloblasts and odontoblasts or in the forming of the enamel extracellular matrix. The chain is Tuftelin-interacting protein 11 (TFIP11) from Macaca fascicularis (Crab-eating macaque).